A 76-amino-acid chain; its full sequence is Large ribosomal subunit protein bL31 (76 aa).

It belongs to the bacterial ribosomal protein bL31 family. Type A subfamily. In terms of assembly, part of the 50S ribosomal subunit.

Its function is as follows. Binds the 23S rRNA. This chain is Large ribosomal subunit protein bL31, found in Picosynechococcus sp. (strain ATCC 27264 / PCC 7002 / PR-6) (Agmenellum quadruplicatum).